We begin with the raw amino-acid sequence, 62 residues long: Alpha-conotoxin Vt1.27 (62 aa).

An N-terminal signal peptide occupies residues 1 to 21; it reads MGMRMMFTVFLLVVLATTVVS. Positions 22 to 40 are excised as a propeptide; the sequence is FTLDRASDGASAAADLVAR. Intrachain disulfides connect cysteine 46/cysteine 52 and cysteine 47/cysteine 61.

Belongs to the conotoxin A superfamily. Expressed by the venom duct.

It is found in the secreted. Its function is as follows. The short (45-61) amidated synthetic peptide inhibits the rat neuronal alpha-3-beta-2/CHRNA3-CHRNB2 nicotinic acetylcholine receptor (nAChR) (IC(50)=1.16 uM). It also inhibits Cav2.2/CACNA1C voltage-gated calcium channel (IC(50)=398 nM). In vivo, when tested in rat pain models, this short amidated peptide increases the pain threshold. The chain is Alpha-conotoxin Vt1.27 from Conus planorbis (Planorbis cone).